Here is a 225-residue protein sequence, read N- to C-terminus: Methylthioribulose-1-phosphate dehydratase (225 aa).

Zn(2+) is bound by residues His106 and His108.

It belongs to the aldolase class II family. MtnB subfamily. Zn(2+) serves as cofactor.

It catalyses the reaction 5-(methylsulfanyl)-D-ribulose 1-phosphate = 5-methylsulfanyl-2,3-dioxopentyl phosphate + H2O. Its pathway is amino-acid biosynthesis; L-methionine biosynthesis via salvage pathway; L-methionine from S-methyl-5-thio-alpha-D-ribose 1-phosphate: step 2/6. Its function is as follows. Catalyzes the dehydration of methylthioribulose-1-phosphate (MTRu-1-P) into 2,3-diketo-5-methylthiopentyl-1-phosphate (DK-MTP-1-P). The chain is Methylthioribulose-1-phosphate dehydratase from Xanthomonas oryzae pv. oryzae (strain PXO99A).